The primary structure comprises 366 residues: MARERPPGRGCGVLRRCLLGAVLLFGLRLCAELRRAGPGSPTRSAPPGPAWRPPGPHLPPAPGQPRGASRRQVTYVRSGRRAPPGGGGSGTPEPGCCAPRGRPRRKGPRWHIDLQPWAGSAQSLDEEAWRFLRYISTTQIACNHMNTDSLATDSSPTHKPWSVCLDDRFNLAHQIRNKQCRLYSLGLGSDDTHFEVSMANNGCEVHRFDPSVKSAHILESQHLWYHRLSIDWRDPHPAVAAQKPHSNTRKLGSILNEFGHHKIDVLKADLESAEWKVLENLILEDVLEQIGQLIFEIHLHWPGFEVSGSDSSVVRFWYSLLKELEQKDFRLFHSYKDLSKPQLFLKKDIFNASSCYTLSWVNTRWK.

An N-terminal signal peptide occupies residues 1–29 (MARERPPGRGCGVLRRCLLGAVLLFGLRL). The interval 36–110 (AGPGSPTRSA…GRPRRKGPRW (75 aa)) is disordered. The segment covering 44–63 (SAPPGPAWRPPGPHLPPAPG) has biased composition (pro residues). The span at 91-100 (TPEPGCCAPR) shows a compositional bias: low complexity.

Belongs to the methyltransferase superfamily.

Its subcellular location is the secreted. In terms of biological role, probable methyltransferase. The chain is Probable methyltransferase-like protein 24 (METTL24) from Homo sapiens (Human).